A 141-amino-acid chain; its full sequence is Small ribosomal subunit protein bS16 (141 aa).

Residues 84 to 141 (TRKARSNPEKSKPKAKAQERLEAARMAEEEAAAAAKAAAEAPAEEAPAAEAPAEEAQA) are disordered. Residues 89–111 (SNPEKSKPKAKAQERLEAARMAE) show a composition bias toward basic and acidic residues. Residues 115 to 141 (AAAAKAAAEAPAEEAPAAEAPAEEAQA) are compositionally biased toward low complexity.

This sequence belongs to the bacterial ribosomal protein bS16 family.

The polypeptide is Small ribosomal subunit protein bS16 (Parvibaculum lavamentivorans (strain DS-1 / DSM 13023 / NCIMB 13966)).